Consider the following 420-residue polypeptide: Histidine--tRNA ligase (420 aa).

This sequence belongs to the class-II aminoacyl-tRNA synthetase family. In terms of assembly, homodimer.

It localises to the cytoplasm. The catalysed reaction is tRNA(His) + L-histidine + ATP = L-histidyl-tRNA(His) + AMP + diphosphate + H(+). The polypeptide is Histidine--tRNA ligase (Thermodesulfovibrio yellowstonii (strain ATCC 51303 / DSM 11347 / YP87)).